The chain runs to 177 residues: Large ribosomal subunit protein uL6 (177 aa).

Belongs to the universal ribosomal protein uL6 family. In terms of assembly, part of the 50S ribosomal subunit.

In terms of biological role, this protein binds to the 23S rRNA, and is important in its secondary structure. It is located near the subunit interface in the base of the L7/L12 stalk, and near the tRNA binding site of the peptidyltransferase center. In Klebsiella pneumoniae subsp. pneumoniae (strain ATCC 700721 / MGH 78578), this protein is Large ribosomal subunit protein uL6.